The chain runs to 386 residues: 2-isopropylmalate synthase (386 aa).

One can recognise a Pyruvate carboxyltransferase domain in the interval 12–265 (VRIFDTTLRD…DVGVRTYLLY (254 aa)). Positions 21, 203, 205, and 239 each coordinate a divalent metal cation.

This sequence belongs to the alpha-IPM synthase/homocitrate synthase family. As to quaternary structure, homodimer. It depends on a divalent metal cation as a cofactor.

The enzyme catalyses 3-methyl-2-oxobutanoate + acetyl-CoA + H2O = (2S)-2-isopropylmalate + CoA + H(+). The protein operates within amino-acid biosynthesis; L-leucine biosynthesis; L-leucine from 3-methyl-2-oxobutanoate: step 1/4. Is not inhibited by leucine. Its function is as follows. Catalyzes the condensation of the acetyl group of acetyl-CoA with 3-methyl-2-oxobutanoate (2-oxoisovalerate) to form 3-carboxy-3-hydroxy-4-methylpentanoate (2-isopropylmalate). Carries out the first step of the leucine biosynthesis pathway. Also displays a low citramalate synthase activity, using pyruvate as substrate, but is unable to use 2-oxoglutarate. The protein is 2-isopropylmalate synthase of Sulfolobus acidocaldarius (strain ATCC 33909 / DSM 639 / JCM 8929 / NBRC 15157 / NCIMB 11770).